A 432-amino-acid chain; its full sequence is Trigger factor (432 aa).

One can recognise a PPIase FKBP-type domain in the interval 161 to 246 (EDRVTIDFSG…LKKVEERELP (86 aa)).

Belongs to the FKBP-type PPIase family. Tig subfamily.

Its subcellular location is the cytoplasm. It carries out the reaction [protein]-peptidylproline (omega=180) = [protein]-peptidylproline (omega=0). Functionally, involved in protein export. Acts as a chaperone by maintaining the newly synthesized protein in an open conformation. Functions as a peptidyl-prolyl cis-trans isomerase. The chain is Trigger factor from Enterobacter sp. (strain 638).